Here is a 435-residue protein sequence, read N- to C-terminus: Elongation factor 1-alpha (435 aa).

The region spanning 4–229 (KPHLNLIVIG…DQLEIPPKPV (226 aa)) is the tr-type G domain. The G1 stretch occupies residues 13–20 (GHVDHGKS). Residue 13-20 (GHVDHGKS) coordinates GTP. Residue Ser-20 coordinates Mg(2+). The interval 69-73 (GVTIN) is G2. Positions 90–93 (DAPG) are G3. GTP is bound by residues 90–94 (DAPGH) and 152–155 (NKMD). The interval 152–155 (NKMD) is G4. The interval 193–195 (VAP) is G5.

This sequence belongs to the TRAFAC class translation factor GTPase superfamily. Classic translation factor GTPase family. EF-Tu/EF-1A subfamily.

The protein resides in the cytoplasm. It catalyses the reaction GTP + H2O = GDP + phosphate + H(+). GTP hydrolase that promotes the GTP-dependent binding of aminoacyl-tRNA to the A-site of ribosomes during protein biosynthesis. This Sulfurisphaera tokodaii (strain DSM 16993 / JCM 10545 / NBRC 100140 / 7) (Sulfolobus tokodaii) protein is Elongation factor 1-alpha.